Consider the following 274-residue polypeptide: Large ribosomal subunit protein uL2cz (274 aa).

Disordered stretches follow at residues 1-25 (MAIH…VKSN) and 224-274 (NPVD…RRSK). Residues 7–25 (KTSTPSTRNGTVDSQVKSN) show a composition bias toward polar residues.

The protein belongs to the universal ribosomal protein uL2 family. As to quaternary structure, part of the 50S ribosomal subunit.

It localises to the plastid. The protein localises to the chloroplast. The sequence is that of Large ribosomal subunit protein uL2cz (rpl2-A) from Atropa belladonna (Belladonna).